Reading from the N-terminus, the 241-residue chain is Ribulose-phosphate 3-epimerase 1 (241 aa).

Ser21 provides a ligand contact to substrate. His46, Asp48, and His79 together coordinate a divalent metal cation. The Proton acceptor role is filled by Asp48. Substrate-binding positions include His79, Gly155–Gly158, Asp192–Gly194, and Gly214–Ser215. Residue Asp192 coordinates a divalent metal cation. Asp192 functions as the Proton donor in the catalytic mechanism.

Belongs to the ribulose-phosphate 3-epimerase family. A divalent metal cation serves as cofactor.

The enzyme catalyses D-ribulose 5-phosphate = D-xylulose 5-phosphate. It participates in carbohydrate degradation. Catalyzes the reversible epimerization of D-ribulose 5-phosphate to D-xylulose 5-phosphate. The chain is Ribulose-phosphate 3-epimerase 1 from Cupriavidus necator (strain ATCC 17699 / DSM 428 / KCTC 22496 / NCIMB 10442 / H16 / Stanier 337) (Ralstonia eutropha).